A 178-amino-acid chain; its full sequence is ATP synthase subunit delta (178 aa).

Belongs to the ATPase delta chain family. In terms of assembly, F-type ATPases have 2 components, F(1) - the catalytic core - and F(0) - the membrane proton channel. F(1) has five subunits: alpha(3), beta(3), gamma(1), delta(1), epsilon(1). F(0) has three main subunits: a(1), b(2) and c(10-14). The alpha and beta chains form an alternating ring which encloses part of the gamma chain. F(1) is attached to F(0) by a central stalk formed by the gamma and epsilon chains, while a peripheral stalk is formed by the delta and b chains.

Its subcellular location is the cell membrane. Functionally, f(1)F(0) ATP synthase produces ATP from ADP in the presence of a proton or sodium gradient. F-type ATPases consist of two structural domains, F(1) containing the extramembraneous catalytic core and F(0) containing the membrane proton channel, linked together by a central stalk and a peripheral stalk. During catalysis, ATP synthesis in the catalytic domain of F(1) is coupled via a rotary mechanism of the central stalk subunits to proton translocation. This protein is part of the stalk that links CF(0) to CF(1). It either transmits conformational changes from CF(0) to CF(1) or is implicated in proton conduction. The chain is ATP synthase subunit delta from Streptococcus sanguinis (strain SK36).